The sequence spans 341 residues: Probable GDP-mannose transporter 2 (341 aa).

Residues 1–11 (MSKHKHEWTES) lie on the Cytoplasmic side of the membrane. Residues 12 to 32 (VANSGPASILSYCASSILMTV) traverse the membrane as a helical segment. At 33-46 (TNKFVVNLDNFNMN) the chain is on the lumenal side. The chain crosses the membrane as a helical span at residues 47–67 (FVMLFVQSLVCTVTLCILRIV). The Cytoplasmic portion of the chain corresponds to 68 to 85 (GVANFRSLNRTDVKNWFP). Residues 86-106 (ISLLLVLMIYTSLKSLQYLAV) traverse the membrane as a helical segment. Residue proline 107 is a topological domain, lumenal. Residues 108-128 (IYTIFKNLTIILIAYGEVLFF) traverse the membrane as a helical segment. At 129–139 (GGKVTSMELTS) the chain is on the cytoplasmic side. The helical transmembrane segment at 140-160 (FIMMVLSSVVATWGDQQAIAI) threads the bilayer. Over 161-176 (KASSLEDLDQELVEST) the chain is Lumenal. Residues 177 to 197 (IFVLNPGYLWMFTNCISSALF) traverse the membrane as a helical segment. Residues 198 to 214 (VLIMRKRIRLTNFKDYD) are Cytoplasmic-facing. A helical membrane pass occupies residues 215 to 235 (TMFYNNVLALPLLLVFSFIME). Residues 236 to 251 (DWSTKNLSVNLSADSL) lie on the Lumenal side of the membrane. N-linked (GlcNAc...) asparagine glycosylation is found at asparagine 241 and asparagine 245. Residues 252–272 (AAMVISGLMSVGISYCSGWCV) form a helical membrane-spanning segment. Residues 273–278 (RVTSST) lie on the Cytoplasmic side of the membrane. A helical transmembrane segment spans residues 279 to 299 (TYSMVGALNKLPIALAGLVFF). At 300 to 303 (DAPK) the chain is on the lumenal side. A helical transmembrane segment spans residues 304–324 (NFLSFFSIFLGFLSGLLYAVA). Residues 325–341 (KQKKIQQQKVLAATLEK) are Cytoplasmic-facing.

It belongs to the TPT transporter family. SLC35D subfamily.

It localises to the golgi apparatus membrane. The protein resides in the cytoplasmic vesicle membrane. It is found in the endoplasmic reticulum membrane. Its function is as follows. Involved in the import of GDP-mannose from the cytoplasm into the Golgi lumen. This is Probable GDP-mannose transporter 2 (HVG1) from Saccharomyces cerevisiae (strain Lalvin EC1118 / Prise de mousse) (Baker's yeast).